Consider the following 627-residue polypeptide: Chaperone protein HtpG (627 aa).

Positions 1 to 339 (MKGQETRGFQ…SNDLPLNVSR (339 aa)) are a; substrate-binding. Residues 340–555 (EILQDSRVTQ…ADEMSTQMAK (216 aa)) form a b region. The c stretch occupies residues 556-627 (LFAAAGQQAP…IRRMNQLLSA (72 aa)).

Belongs to the heat shock protein 90 family. In terms of assembly, homodimer.

The protein resides in the cytoplasm. Its function is as follows. Molecular chaperone. Has ATPase activity. This is Chaperone protein HtpG from Pectobacterium atrosepticum (strain SCRI 1043 / ATCC BAA-672) (Erwinia carotovora subsp. atroseptica).